The sequence spans 78 residues: Defensin-like protein 141 (78 aa).

Residues 1–24 (MTKSIISAFFIILILGMMVNEIEG) form the signal peptide. Intrachain disulfides connect Cys-31–Cys-76, Cys-40–Cys-59, Cys-45–Cys-70, and Cys-49–Cys-72.

It belongs to the DEFL family.

It localises to the secreted. In Arabidopsis thaliana (Mouse-ear cress), this protein is Defensin-like protein 141 (LCR3).